Here is a 327-residue protein sequence, read N- to C-terminus: GMP reductase (327 aa).

The active-site Thioimidate intermediate is Cys176. NADP(+) is bound at residue 205–228 (IIADGGIRTHGDIVKSIRFGATMV).

Belongs to the IMPDH/GMPR family. GuaC type 2 subfamily.

It catalyses the reaction IMP + NH4(+) + NADP(+) = GMP + NADPH + 2 H(+). In terms of biological role, catalyzes the irreversible NADPH-dependent deamination of GMP to IMP. It functions in the conversion of nucleobase, nucleoside and nucleotide derivatives of G to A nucleotides, and in maintaining the intracellular balance of A and G nucleotides. In Helicobacter pylori (strain ATCC 700392 / 26695) (Campylobacter pylori), this protein is GMP reductase.